A 55-amino-acid chain; its full sequence is Large ribosomal subunit protein bL33 (55 aa).

Basic and acidic residues predominate over residues 1-11 (MAKGGREKIKL). The interval 1 to 26 (MAKGGREKIKLESTAGTGHFYTTDKN) is disordered.

It belongs to the bacterial ribosomal protein bL33 family.

The protein is Large ribosomal subunit protein bL33 of Methylibium petroleiphilum (strain ATCC BAA-1232 / LMG 22953 / PM1).